Here is a 282-residue protein sequence, read N- to C-terminus: tRNA (guanine-N(1)-)-methyltransferase (282 aa).

The tract at residues 77–114 (TGPAATVSDLESSAEHKRNLRPATTNGDAEPLGEKAGG) is disordered. S-adenosyl-L-methionine contacts are provided by residues G149 and 173–178 (IGDYVL).

The protein belongs to the RNA methyltransferase TrmD family. Homodimer.

Its subcellular location is the cytoplasm. It carries out the reaction guanosine(37) in tRNA + S-adenosyl-L-methionine = N(1)-methylguanosine(37) in tRNA + S-adenosyl-L-homocysteine + H(+). In terms of biological role, specifically methylates guanosine-37 in various tRNAs. In Corynebacterium jeikeium (strain K411), this protein is tRNA (guanine-N(1)-)-methyltransferase.